Here is a 433-residue protein sequence, read N- to C-terminus: Glutamate-1-semialdehyde 2,1-aminomutase (433 aa).

Lysine 270 is subject to N6-(pyridoxal phosphate)lysine.

It belongs to the class-III pyridoxal-phosphate-dependent aminotransferase family. HemL subfamily. In terms of assembly, homodimer. It depends on pyridoxal 5'-phosphate as a cofactor.

The protein localises to the cytoplasm. It carries out the reaction (S)-4-amino-5-oxopentanoate = 5-aminolevulinate. It functions in the pathway porphyrin-containing compound metabolism; protoporphyrin-IX biosynthesis; 5-aminolevulinate from L-glutamyl-tRNA(Glu): step 2/2. In Symbiobacterium thermophilum (strain DSM 24528 / JCM 14929 / IAM 14863 / T), this protein is Glutamate-1-semialdehyde 2,1-aminomutase.